Consider the following 130-residue polypeptide: Small ribosomal subunit protein uS8 (130 aa).

Belongs to the universal ribosomal protein uS8 family. Part of the 30S ribosomal subunit. Contacts proteins S5 and S12.

Its function is as follows. One of the primary rRNA binding proteins, it binds directly to 16S rRNA central domain where it helps coordinate assembly of the platform of the 30S subunit. The sequence is that of Small ribosomal subunit protein uS8 from Pseudomonas entomophila (strain L48).